A 465-amino-acid polypeptide reads, in one-letter code: Argininosuccinate lyase (465 aa).

This sequence belongs to the lyase 1 family. Argininosuccinate lyase subfamily.

It is found in the cytoplasm. The enzyme catalyses 2-(N(omega)-L-arginino)succinate = fumarate + L-arginine. It participates in amino-acid biosynthesis; L-arginine biosynthesis; L-arginine from L-ornithine and carbamoyl phosphate: step 3/3. This Rhodopseudomonas palustris (strain ATCC BAA-98 / CGA009) protein is Argininosuccinate lyase.